The primary structure comprises 147 residues: MGAELVKWVKSHKIDAHIITFVAKMPYIDSIKLLEAGAKGCVWKTSHPAKLNRAIDSISNGYTYFDSVHMDCEKISSRYSSDNQLTNRESEILQLIADGKTNKEIANFLQLSRKTVETHRLNIMKKLDVHSGIELIKTALRMGVCTI.

The Response regulatory domain occupies 1 to 59 (MGAELVKWVKSHKIDAHIITFVAKMPYIDSIKLLEAGAKGCVWKTSHPAKLNRAIDSIS). Residues 78-143 (RYSSDNQLTN…ELIKTALRMG (66 aa)) enclose the HTH luxR-type domain. The H-T-H motif DNA-binding region spans 102–121 (NKEIANFLQLSRKTVETHRL).

In terms of processing, overexpressed protein is phosphorylated in vitro by non-cognate histidine kinases BarA and UhpB.

This is an uncharacterized protein from Escherichia coli (strain K12).